Here is a 342-residue protein sequence, read N- to C-terminus: Non-homologous end-joining protein 1 (342 aa).

The next 2 helical transmembrane spans lie at 27–47 (LLLFLPMSSPTTIVMIVLVSL) and 129–149 (MFYMILQSLCMLLLKLVNLST). The interaction with LIF1 stretch occupies residues 173–342 (LRDLDGGSKV…RKFGKVRIKN (170 aa)). Residues 270-342 (ADPTNEARPN…RKFGKVRIKN (73 aa)) form a disordered region. Residues 286–296 (PKTDFKPKSRE) are compositionally biased toward basic and acidic residues. A compositionally biased stretch (polar residues) spans 297 to 312 (SSTSSQLRLENFSESE). A compositionally biased stretch (basic residues) spans 331–342 (KKRKFGKVRIKN).

Belongs to the XRCC4-XLF family. XLF subfamily. In terms of assembly, interacts (via C-terminus) with LIF1 (via N-terminus); the interaction is direct. Interacts with DNL4.

The protein localises to the cytoplasm. It localises to the nucleus membrane. In terms of biological role, involved in non-homologous end joining (NHEJ). Facilitates the transport of LIF1 into the nucleus, where it can interact with DNA ligase DNL4 to repair double-strand breaks (DSB). Mediates mating-type regulation of NHEJ. Prevents chromosome circularisation by NHEJ in absence of telomerase. The sequence is that of Non-homologous end-joining protein 1 (NEJ1) from Saccharomyces cerevisiae (strain ATCC 204508 / S288c) (Baker's yeast).